We begin with the raw amino-acid sequence, 600 residues long: ATP-dependent ubiquitin transferase-like protein Cap2 (600 aa).

An E2-like domain region spans residues 1 to 158; sequence MSTVVQQVPA…QEKLATTGDA (158 aa). C109 acts as the For E2-like domain in catalysis. The linker domain stretch occupies residues 159 to 373; sequence VELPAFPDQS…DQLRTRGEAA (215 aa). The adenylation plus E1-like domain stretch occupies residues 375–600; it reads DIRSKKVLII…GTVEKEPHEY (226 aa). C548 acts as the For E1-like domain in catalysis.

It in the C-terminal section; belongs to the HesA/MoeB/ThiF family. As to quaternary structure, crystallizes as a Cap2 homodimer bound on each side by a CdnD monomer.

Its function is as follows. CD-NTase priming component of a CBASS antiviral system. CBASS (cyclic oligonucleotide-based antiphage signaling system) provides immunity against bacteriophages. The CD-NTase protein (CdnD) synthesizes cyclic nucleotides in response to infection; these serve as specific second messenger signals. The signals activate a diverse range of effectors, leading to bacterial cell death and thus abortive phage infection. A type II-C(AAG) CBASS system. Functionally, primes CdnD; acts as a protein transferase, conjugating CdnD, the CD-NTase, to unidentified target(s) in the cell via an E1-E2 ubiquitin transferase-like mechanism. Upon phage infection CdnD activates and makes cyclic nucleotides. During the conjugation reaction CdnD is transiently attached to AMP. Protein conjugation requires ATP. Protects E.coli against phage T2 infection. When the cdnD-cap2-cap3-cap4 operon is introduced in E.coli there is a more than 10(3) decrease in the efficiency of T2 plaque formation. The operon does not protect against phage T5 and only about 10-fold against T7. This chain is ATP-dependent ubiquitin transferase-like protein Cap2, found in Enterobacter hormaechei subsp. hoffmannii (strain UCI 50).